A 208-amino-acid polypeptide reads, in one-letter code: 2-phospho-L-lactate guanylyltransferase (208 aa).

This sequence belongs to the CofC family. As to quaternary structure, homodimer.

It carries out the reaction (2S)-2-phospholactate + GTP + H(+) = (2S)-lactyl-2-diphospho-5'-guanosine + diphosphate. The protein operates within cofactor biosynthesis; coenzyme F420 biosynthesis. Functionally, guanylyltransferase that catalyzes the activation of (2S)-2-phospholactate (2-PL) as (2S)-lactyl-2-diphospho-5'-guanosine, via the condensation of 2-PL with GTP. It is involved in the biosynthesis of coenzyme F420, a hydride carrier cofactor. This Methanosarcina acetivorans (strain ATCC 35395 / DSM 2834 / JCM 12185 / C2A) protein is 2-phospho-L-lactate guanylyltransferase.